The primary structure comprises 526 residues: MPWLTVSGLDLGSVVTSTWHLLLLGAASWILARILAWTYSFCENCSRLRCFPQSPKRNWFLGHLGTIQSNEEGMRLVTEMGQTFRDIHLCWLGPVIPVLRLVDPAFVAPLLQAPALVAPKDTTFLRFLKPWLGDGLFLSSGDKWSRHRRLLTPAFHFDILKPYVKIFNQSVNIMHAKWKHLCLEGSARLEMFENISLMTLDSLQKCLFGFDSNCQESPSEYISAILELSSLIIKRSQQLFLYLDFLYYRTADGRRFRKACDLVHNFTDAVIRERRRLLSSQGTDEFLESKTKSKSKTLDFIDVLLLAKDEHGKELSDEDIRAEADTFMFGGHDTTASALSWILYNLARHPEYQERCRQEVWELLRDREPEEIEWDDLAQLPFLTMCIKESLRLHPPAIDLLRRCTQDIVLPDGRVIPKGNICVISIFGIHHNPSVWPDPEVFDPFRFDSENRQKRSPLSFIPFSAGPRNCIGQTFAMNEMKVVVALTLLRFRVLPDDKEPRRKPEIILRAEGGLWLRMEPLSTDTQ.

Heme is bound at residue cysteine 470.

The protein belongs to the cytochrome P450 family. The cofactor is heme. In terms of tissue distribution, high expression in liver and kidney. Lower expression in brain.

It is found in the endoplasmic reticulum membrane. The protein localises to the microsome membrane. The catalysed reaction is an organic molecule + reduced [NADPH--hemoprotein reductase] + O2 = an alcohol + oxidized [NADPH--hemoprotein reductase] + H2O + H(+). The sequence is that of Cytochrome P450 4F5 (Cyp4f5) from Rattus norvegicus (Rat).